Reading from the N-terminus, the 202-residue chain is LexA repressor 2 (202 aa).

A DNA-binding region (H-T-H motif) is located at residues 28 to 48 (LAEISEAFGFASRSVARKHIV). Catalysis depends on for autocatalytic cleavage activity residues Ser-123 and Lys-160.

The protein belongs to the peptidase S24 family. Homodimer.

The enzyme catalyses Hydrolysis of Ala-|-Gly bond in repressor LexA.. Its function is as follows. Represses a number of genes involved in the response to DNA damage (SOS response), including recA and lexA. In the presence of single-stranded DNA, RecA interacts with LexA causing an autocatalytic cleavage which disrupts the DNA-binding part of LexA, leading to derepression of the SOS regulon and eventually DNA repair. The chain is LexA repressor 2 from Pseudomonas syringae pv. tomato (strain ATCC BAA-871 / DC3000).